The following is a 698-amino-acid chain: MARTTPIERYRNIGICAHVDAGKTTTTERVLFYTGLSHKIGEVHDGAATTDWMVQEQERGITITSAAVTTFWRGMDAQFTEHRINIIDTPGHVDFTIEVERSLRVLDGAVVVFCGSSGVEPQSETVWRQADKYRVPRLVFVNKMDRAGADFERVVKQIRTRLGATCVPIQLNIGAEENFTGVIDLIKMKAINWNEADQGMTFTYEEIPASLAAKAAEMHEYLVEAAAEASDELMDKYLEEGTLSEDEIKKALRQRTINNEIVLATCGSAFKNKGVQAVLDAVVEFLPAPVDVPPIKGIDDDEQEVERPSDDNAPFAALAFKIATDPFVGTLTFIRVYSGVLESGSGVYNSVKQKRERIGRIVQMHANDRTELKEVRAGDIAAAIGLKEVTTGDTLCDPDHKVILERMEFPEPVITIAVEPKSKADQDKMGIALQKLAAEDPSFRVETDEESSQTLISGMGELHLDIIVDRMRREFGVECNVGKPQVAYRETIRASVEAEGKFVRQSGGRGQFGHVWLKLEPNEEGAGYEFINAIVGGVVPREFIPAVDKGIQEQMKNGVLAGFPVLDVKVTLFDGSYHDVDSNEMAFKIAGSMGFKKGALEANPVLLEPCMKVEVTTPENYMGDVVGDLNRRRGLIEGMDDGFGGIKIVHAVVPLSEMFGYATDLRSATQGRASYSMEFLKYSDAPQNIAKAIIESRS.

The tr-type G domain maps to 8 to 290; sequence ERYRNIGICA…AVVEFLPAPV (283 aa). GTP is bound by residues 17–24, 88–92, and 142–145; these read AHVDAGKT, DTPGH, and NKMD.

The protein belongs to the TRAFAC class translation factor GTPase superfamily. Classic translation factor GTPase family. EF-G/EF-2 subfamily.

The protein localises to the cytoplasm. Catalyzes the GTP-dependent ribosomal translocation step during translation elongation. During this step, the ribosome changes from the pre-translocational (PRE) to the post-translocational (POST) state as the newly formed A-site-bound peptidyl-tRNA and P-site-bound deacylated tRNA move to the P and E sites, respectively. Catalyzes the coordinated movement of the two tRNA molecules, the mRNA and conformational changes in the ribosome. This is Elongation factor G 1 from Shewanella sp. (strain MR-4).